The chain runs to 387 residues: Phosphoglycerate kinase (387 aa).

Substrate-binding positions include 21 to 23, Arg-36, 59 to 62, Arg-113, and Arg-146; these read DLN and HLGR. ATP contacts are provided by residues Lys-197, Glu-314, and 340–343; that span reads GGDT.

It belongs to the phosphoglycerate kinase family. As to quaternary structure, monomer.

It localises to the cytoplasm. The enzyme catalyses (2R)-3-phosphoglycerate + ATP = (2R)-3-phospho-glyceroyl phosphate + ADP. Its pathway is carbohydrate degradation; glycolysis; pyruvate from D-glyceraldehyde 3-phosphate: step 2/5. This chain is Phosphoglycerate kinase, found in Pseudomonas syringae pv. tomato (strain ATCC BAA-871 / DC3000).